The sequence spans 214 residues: Neuromodulin (214 aa).

A disordered region spans residues 1-214; that stretch reads MLCCMRRTKQ…EEAKPDQENA (214 aa). Residues Cys-3 and Cys-4 are each lipidated (S-palmitoyl cysteine). Basic and acidic residues-rich tracts occupy residues 9 to 33, 52 to 88, and 95 to 122; these read KQVEKNEDGDQKIDQDGNKPEDKAH, MKDDKKDDNSEEAVENHKGEAKDEAATTENKTPKTEE, and LEVKKEAISSPAEDKKQEPSSEKPKDTP. The region spanning 32–61 is the IQ domain; sequence AHKAATKIQASFRGHIIRKKMKDDKKDDNS. Residues 124-133 are compositionally biased toward low complexity; it reads EENQASAESE. 3 stretches are compositionally biased toward basic and acidic residues: residues 150-160, 168-193, and 205-214; these read QAKEESKKADV, ASEKEQEKAESSQEDVKKDEVEEIKA, and EEAKPDQENA.

Belongs to the neuromodulin family. Binds calmodulin with a greater affinity in the absence of Ca(2+) than in its presence. Palmitoylated. Palmitoylation is essential for plasma membrane association.

It localises to the cell membrane. Its subcellular location is the cell projection. It is found in the growth cone membrane. The protein resides in the synapse. The protein localises to the filopodium membrane. This protein is associated with nerve growth. It is a major component of the motile 'growth cones' that form the tips of elongating axons. Plays a role in axonal and dendritic filopodia induction. This Xenopus laevis (African clawed frog) protein is Neuromodulin (gap43).